A 414-amino-acid polypeptide reads, in one-letter code: Sex comb on midleg-like protein 4 (414 aa).

Phosphoserine occurs at positions 55 and 65. Positions 257-276 are enriched in polar residues; it reads HRGSLHPSSSLYCKRQNSGD. The interval 257–343 is disordered; the sequence is HRGSLHPSSS…DARRPRSRNP (87 aa). Residues 284-304 are compositionally biased toward low complexity; that stretch reads AATAGGPRTSPMSSGGPSAPG. Positions 288 to 354 constitute an SAM domain; that stretch reads GGPRTSPMSS…AWTVEDVVWF (67 aa). A compositionally biased stretch (polar residues) spans 312–332; that stretch reads PKRNTTSLEGNRCASSPSQDA.

Belongs to the SCM family.

It is found in the nucleus. Its function is as follows. Putative Polycomb group (PcG) protein. PcG proteins act by forming multiprotein complexes, which are required to maintain the transcriptionally repressive state of homeotic genes throughout development. This is Sex comb on midleg-like protein 4 (SCML4) from Homo sapiens (Human).